Consider the following 42-residue polypeptide: uncharacterized protein (42 aa).

Residues 15-37 form a helical membrane-spanning segment; the sequence is PLILAVDCAIIIPNTNFIHSFLI.

The protein resides in the membrane. This is an uncharacterized protein from Dictyostelium discoideum (Social amoeba).